We begin with the raw amino-acid sequence, 154 residues long: MPLKPLALSLQWGRFDAAAAQRSALPRHLIRRWIRHALTTDAEITVRIVGADEGRQLNRTYRNKDYATNVLTFVYSQAPLVTADLLLCAPVIEREAQQQGKHLQAHYAHMLVHGTLHAQGWDHEGSADADAMQARETQIMQALGFADPYARQPG.

His113, His117, and His123 together coordinate Zn(2+).

The protein belongs to the endoribonuclease YbeY family. The cofactor is Zn(2+).

The protein localises to the cytoplasm. Single strand-specific metallo-endoribonuclease involved in late-stage 70S ribosome quality control and in maturation of the 3' terminus of the 16S rRNA. This chain is Endoribonuclease YbeY, found in Verminephrobacter eiseniae (strain EF01-2).